We begin with the raw amino-acid sequence, 606 residues long: Phosphomethylpyrimidine synthase (606 aa).

The segment covering 1–13 (MTTADARTPASKQ) has biased composition (polar residues). Disordered regions lie at residues 1 to 49 (MTTA…SRPD) and 105 to 147 (AGRP…DGRP). A compositionally biased stretch (low complexity) spans 14–31 (NDGTPDGTTPDAGTPNDG). Residues 105-117 (AGRPVRPEDDGLK) show a composition bias toward basic and acidic residues. Substrate-binding positions include Asn213, Met242, Tyr271, His307, 327–329 (SRG), 368–371 (DGLR), and Glu407. His411 lines the Zn(2+) pocket. Substrate is bound at residue Tyr434. Position 475 (His475) interacts with Zn(2+). Residues Cys555, Cys558, and Cys563 each contribute to the [4Fe-4S] cluster site.

The protein belongs to the ThiC family. Requires [4Fe-4S] cluster as cofactor.

The enzyme catalyses 5-amino-1-(5-phospho-beta-D-ribosyl)imidazole + S-adenosyl-L-methionine = 4-amino-2-methyl-5-(phosphooxymethyl)pyrimidine + CO + 5'-deoxyadenosine + formate + L-methionine + 3 H(+). The protein operates within cofactor biosynthesis; thiamine diphosphate biosynthesis. Catalyzes the synthesis of the hydroxymethylpyrimidine phosphate (HMP-P) moiety of thiamine from aminoimidazole ribotide (AIR) in a radical S-adenosyl-L-methionine (SAM)-dependent reaction. The protein is Phosphomethylpyrimidine synthase of Streptomyces griseus subsp. griseus (strain JCM 4626 / CBS 651.72 / NBRC 13350 / KCC S-0626 / ISP 5235).